The chain runs to 548 residues: Chaperonin GroEL (548 aa).

ATP contacts are provided by residues 30 to 33, Lys51, 87 to 91, Gly415, 479 to 481, and Asp495; these read TLGP, DGTTT, and NAA.

Belongs to the chaperonin (HSP60) family. As to quaternary structure, forms a cylinder of 14 subunits composed of two heptameric rings stacked back-to-back. Interacts with the co-chaperonin GroES.

The protein resides in the cytoplasm. The catalysed reaction is ATP + H2O + a folded polypeptide = ADP + phosphate + an unfolded polypeptide.. In terms of biological role, together with its co-chaperonin GroES, plays an essential role in assisting protein folding. The GroEL-GroES system forms a nano-cage that allows encapsulation of the non-native substrate proteins and provides a physical environment optimized to promote and accelerate protein folding. This Klebsiella aerogenes (strain ATCC 13048 / DSM 30053 / CCUG 1429 / JCM 1235 / KCTC 2190 / NBRC 13534 / NCIMB 10102 / NCTC 10006 / CDC 819-56) (Enterobacter aerogenes) protein is Chaperonin GroEL.